The following is a 790-amino-acid chain: MSNDSTEGTVGSCNATGLTDEKVKAYLSLHPQVLDEFVSESVSAETVEKWLKRKTNKAKDEPSPKEVSRYQDTNMQGVVYELNSYIEQRLDTGGDNHLLLYELSSIIRIATKADGFALYFLGECNNSLCVFIPPGMKEGQPRLIPAGPITQGTTISAYVAKSRKTLLVEDILGDERFPRGTGLESGTRIQSVLCLPIVTAIGDLIGILELYRHWGKEAFCLSHQEVATANLAWASVAIHQVQVCRGLAKQTELNDFLLDVSKTYFDNIVAIDSLLEHIMIYAKNLVNADRCALFQVDHKNKELYSDLFDIGEEKEGKPIFKKTKEIRFSIEKGIAGQVARTGEVLNIPDAYADPRFNREVDLYTGYTTRNILCMPIVSRGSVIGVVQMVNKISGSAFSKTDENNFKMFAVFCALALHCANMYHRIRHSECIYRVTMEKLSYHSICTSEEWQGLMRFNLPARICRDIELFHFDIGPFENMWPGIFVYMIHRSCGTSCFELEKLCRFIMSVKKNYRRVPYHNWKHAVTVAHCMYAILQNNNGLFTDLERKGLLIACLCHDLDHRGFSNSYLQKFDHPLAALYSTSTMEQHHFSQTVSILQLEGHNIFSTLSSSEYEQVLEIIRKAIIATDLALYFGNRKQLEEMYQTGSLNLHNQSHRDRVIGLMMTACDLCSVTKLWPVTKLTANDIYAEFWAEGDEMKKLGIQPIPMMDRDKRDEVPQGQLGFYNAVAIPCYTTLTQILPPTEPLLKACRDNLNQWEKVIRGEETAMWISGPGPAPSKSTPEKLNVKVED.

3',5'-cyclic AMP is bound by residues 290 to 291 (RC), 334 to 335 (IA), T368, Q387, and H519. The PDEase domain maps to 446 to 763 (TSEEWQGLMR…NQWEKVIRGE (318 aa)). The active-site Proton donor is the H519. H519 contacts 3',5'-cyclic GMP. The a divalent metal cation site is built by H523, H557, D558, and D668. Residue Q720 participates in 3',5'-cyclic AMP binding. Q720 contributes to the 3',5'-cyclic GMP binding site. The segment at 768–790 (WISGPGPAPSKSTPEKLNVKVED) is disordered. The span at 780–790 (TPEKLNVKVED) shows a compositional bias: basic and acidic residues.

This sequence belongs to the cyclic nucleotide phosphodiesterase family. As to quaternary structure, homodimer. It depends on a divalent metal cation as a cofactor. Detected in striatum (at protein level). Detected in testis and brain.

It is found in the cytoplasm. Its subcellular location is the cytosol. The enzyme catalyses a nucleoside 3',5'-cyclic phosphate + H2O = a nucleoside 5'-phosphate + H(+). It carries out the reaction 3',5'-cyclic AMP + H2O = AMP + H(+). The catalysed reaction is 3',5'-cyclic GMP + H2O = GMP + H(+). It participates in purine metabolism; 3',5'-cyclic AMP degradation; AMP from 3',5'-cyclic AMP: step 1/1. It functions in the pathway purine metabolism; 3',5'-cyclic GMP degradation; GMP from 3',5'-cyclic GMP: step 1/1. In terms of biological role, plays a role in signal transduction by regulating the intracellular concentration of cyclic nucleotides. Can hydrolyze both cAMP and cGMP, but has higher affinity for cAMP and is more efficient with cAMP as substrate. May play a critical role in regulating cAMP and cGMP levels in the striatum, a region of the brain that contributes to the control of movement and cognition. In Mus musculus (Mouse), this protein is cAMP and cAMP-inhibited cGMP 3',5'-cyclic phosphodiesterase 10A (Pde10a).